The following is a 590-amino-acid chain: Nuclear receptor subfamily 2 group C member 1 (590 aa).

Residues 1–166 (MATIEEIAHQ…RLQRCIAFGM (166 aa)) form a required for interaction with KAT2B region. The segment at residues 98–173 (FDLCVVCGDK…FGMKQDSVQC (76 aa)) is a DNA-binding region (nuclear receptor). 2 NR C4-type zinc fingers span residues 101-121 (CVVC…CEGC) and 137-156 (CRGS…CQYC). Phosphoserine occurs at positions 185 and 203. Position 208 is a phosphothreonine (Thr-208). Thr-210 carries the post-translational modification Phosphothreonine; by MAPK1. A Glycyl lysine isopeptide (Lys-Gly) (interchain with G-Cter in SUMO); alternate cross-link involves residue Lys-238. Lys-238 is covalently cross-linked (Glycyl lysine isopeptide (Lys-Gly) (interchain with G-Cter in SUMO2); alternate). The 245-residue stretch at 333–577 (ESMEGSTHLI…SVIPHILKME (245 aa)) folds into the NR LBD domain. Ser-568 carries the phosphoserine; by PKC modification. The segment at 571–590 (PHILKMEPADYNSQIIGHSL) is required for interaction with NRIP1. A Glycyl lysine isopeptide (Lys-Gly) (interchain with G-Cter in SUMO2) cross-link involves residue Lys-575.

It belongs to the nuclear hormone receptor family. NR2 subfamily. In terms of assembly, homodimer. Heterodimer; with NR2C2 which is required for chromatin remodeling and for binding to promoter regions such as globin DR1 repeats. Interacts with ESR1; the interaction prevents homodimerization of ESR1 and suppresses its transcriptional activity and cell growth. Interacts with NRIP1 (via its LXXLL motifs); the interaction provides corepressor activity. Interacts with HDAC3 (via the DNA-binding domain); the interaction recruits phosphorylated NR2C1 to PML bodies for sumoylation. Interacts with HDAC4 (via the DNA-binding domain). Interacts with PIAS1; the interaction is required for sumoylation of NR2C1. Interacts with UBE2I; the interaction is required for sumoylation of NR2C1. Interacts with KAT2B; the interaction acts as a corepressor of gene expression. Post-translationally, sumoylation requires both PIAS1 and UBE2I. Sumoylation appears to dissociate NR2C1 from the PML nuclear bodies. Enhances the interaction with NRIP1 but inhibits interaction with KAT2B. In proliferating cells, stimulation by all-trans retinoic acid, activation of MAPK1-mediated phosphorylation and recruitment to PML bodies with subsequent sumoylation, suppresses OCT4 expression. Phosphorylated on several serine and threonine residues. Phosphorylation on Thr-210, stimulated by all-trans retinoic acid (atRA) mediates PML location and sumoylation in proliferating cells which then modulates its association with effector molecules, KAT2B and NRIP1. Phosphorylation on Ser-568 by PKC is important for protein stability and function as activator of RARB.

Its subcellular location is the nucleus. The protein localises to the PML body. Its function is as follows. Orphan nuclear receptor. Binds the IR7 element in the promoter of its own gene in an autoregulatory negative feedback mechanism. Primarily repressor of a broad range of genes including ESR1 and RARB. Together with NR2C2, forms the core of the DRED (direct repeat erythroid-definitive) complex that represses embryonic and fetal globin transcription. Binds to hormone response elements (HREs) consisting of two 5'-AGGTCA-3' half site direct repeat consensus sequences. Also activator of OCT4 gene expression. Plays a fundamental role in early embryogenesis and regulates embryonic stem cell proliferation and differentiation. Mediator of retinoic acid-regulated preadipocyte proliferation. The protein is Nuclear receptor subfamily 2 group C member 1 (Nr2c1) of Rattus norvegicus (Rat).